We begin with the raw amino-acid sequence, 492 residues long: MKYKDLRDFLTLLEQRGELKRIKQEIDPHLEMTEIADRTLRAGGPALLFENPKGFDIPVLCNLFGTPKRVAMGMGQEQVSALRDVGKLLAFLKEPEPPKGFKDFLSSIPQFKQVLNMPTKVLGKADCQQVVLKDEDVDLYKLPIMQCWKEDVAPLVTWGLTITKGPLKKRQNLGIYRQQLVAKNKLIMRWLSHRGGALDFQEWKETHPGEPFPVSVALGADPATILGAVTPVPDTLSEYAFAGLLRGTKTSVVKSVSNDLEVPASAEIVLEGYIDPNETALEGPYGDHTGYYNEQEYFPVFTVTHITMRKDPIYHSTYTGRPPDEPAVLGEALNEVFIPILQKQFPEIVDFYLPPEGCSYRLAVVTIKKQYAGHAKRVMMGVWSFLRQFMYTKFVIVCDDDVNARDWKDVIWAMTTRCDPARDLTLVENTPIDYLDFASPVAGLGSKMGIDATNKWPGETQREWGVPIKKDPDVVKRVDEIWDSLAIFENEP.

Mn(2+) is bound at residue Asn-172. Residues 175–177 (IYR), 189–191 (RWL), and 194–195 (RG) contribute to the prenylated FMN site. A Mn(2+)-binding site is contributed by Glu-238. Asp-287 acts as the Proton donor in catalysis.

This sequence belongs to the UbiD family. Homohexamer. Requires prenylated FMN as cofactor. It depends on Mn(2+) as a cofactor.

The protein resides in the cell membrane. The catalysed reaction is a 4-hydroxy-3-(all-trans-polyprenyl)benzoate + H(+) = a 2-(all-trans-polyprenyl)phenol + CO2. It participates in cofactor biosynthesis; ubiquinone biosynthesis. Its function is as follows. Catalyzes the decarboxylation of 3-octaprenyl-4-hydroxy benzoate to 2-octaprenylphenol, an intermediate step in ubiquinone biosynthesis. This Pasteurella multocida (strain Pm70) protein is 3-octaprenyl-4-hydroxybenzoate carboxy-lyase.